Here is a 567-residue protein sequence, read N- to C-terminus: Potassium-transporting ATPase potassium-binding subunit (567 aa).

The next 12 helical transmembrane spans lie at 11-31, 67-87, 136-156, 179-199, 255-275, 286-306, 333-353, 363-383, 385-405, 422-442, 489-509, and 532-552; these read LYLL…AALL, AAAI…LQRW, GLAV…VALV, LWLL…QGVV, FSNW…VVMF, VVLL…VYLA, FGVL…CGAV, LGGG…GGVG, GLYG…LMIG, LVSV…AIAV, LMLA…VLAL, and LFVV…YIPA.

The protein belongs to the KdpA family. As to quaternary structure, the system is composed of three essential subunits: KdpA, KdpB and KdpC.

Its subcellular location is the cell inner membrane. In terms of biological role, part of the high-affinity ATP-driven potassium transport (or Kdp) system, which catalyzes the hydrolysis of ATP coupled with the electrogenic transport of potassium into the cytoplasm. This subunit binds the periplasmic potassium ions and delivers the ions to the membrane domain of KdpB through an intramembrane tunnel. This is Potassium-transporting ATPase potassium-binding subunit from Laribacter hongkongensis (strain HLHK9).